Here is a 678-residue protein sequence, read N- to C-terminus: Protein mono-ADP-ribosyltransferase PARP15 (678 aa).

Residues 1–19 show a composition bias toward low complexity; it reads MAAPGPLPAAALSPGAPTP. Residues 1-67 are disordered; it reads MAAPGPLPAA…SSRSMSRDNK (67 aa). Basic residues predominate over residues 49–58; it reads GARKASRRSS. 2 Macro domains span residues 78–267 and 293–464; these read NVVA…TNWS and CFTA…KKRD. Substrate is bound by residues 312–313, 324–325, R331, V335, 409–413, and Q449; these read DI, ST, and GTGNA. One can recognise a PARP catalytic domain in the interval 482 to 678; it reads LPEHWTDMNH…YPEYLITFTA (197 aa).

Belongs to the ARTD/PARP family.

The protein localises to the nucleus. It carries out the reaction L-aspartyl-[protein] + NAD(+) = 4-O-(ADP-D-ribosyl)-L-aspartyl-[protein] + nicotinamide. The catalysed reaction is L-glutamyl-[protein] + NAD(+) = 5-O-(ADP-D-ribosyl)-L-glutamyl-[protein] + nicotinamide. In terms of biological role, mono-ADP-ribosyltransferase that mediates mono-ADP-ribosylation of target proteins. Acts as a negative regulator of transcription. The chain is Protein mono-ADP-ribosyltransferase PARP15 from Homo sapiens (Human).